A 169-amino-acid polypeptide reads, in one-letter code: Inorganic pyrophosphatase (169 aa).

Position 1 is an N-formylmethionine (Met1). Residues Lys28, Arg42, and Tyr54 each coordinate substrate. Positions 64, 69, and 101 each coordinate Mg(2+). Residue Tyr138 coordinates substrate.

The protein belongs to the PPase family. Homohexamer. Requires Mg(2+) as cofactor.

The protein localises to the cytoplasm. It carries out the reaction diphosphate + H2O = 2 phosphate + H(+). With respect to regulation, inhibited by ATP, but not by fructose 1,6-bisphosphate or 2-phosphoglycerate. Its function is as follows. Hydrolyzes PPi generated in anabolic reactions. In terms of biological role, catalyzes the hydrolysis of inorganic pyrophosphate (PPi) forming two phosphate ions. The sequence is that of Inorganic pyrophosphatase from Synechocystis sp. (strain ATCC 27184 / PCC 6803 / Kazusa).